Reading from the N-terminus, the 236-residue chain is Uridylate kinase (236 aa).

ATP is bound at residue 10 to 13 (KLSG). Glycine 52 contributes to the UMP binding site. Residues glycine 53 and arginine 57 each contribute to the ATP site. Residues aspartate 72 and 133–140 (TGNPFFTT) contribute to the UMP site. ATP-binding residues include threonine 160, tyrosine 166, and aspartate 169.

It belongs to the UMP kinase family. As to quaternary structure, homohexamer.

Its subcellular location is the cytoplasm. The catalysed reaction is UMP + ATP = UDP + ADP. The protein operates within pyrimidine metabolism; CTP biosynthesis via de novo pathway; UDP from UMP (UMPK route): step 1/1. Inhibited by UTP. In terms of biological role, catalyzes the reversible phosphorylation of UMP to UDP. The chain is Uridylate kinase from Bacteroides thetaiotaomicron (strain ATCC 29148 / DSM 2079 / JCM 5827 / CCUG 10774 / NCTC 10582 / VPI-5482 / E50).